Here is a 320-residue protein sequence, read N- to C-terminus: Transcription factor bHLH34 (320 aa).

Residues serine 162–leucine 213 enclose the bHLH domain. The tract at residues tryptophan 299–alanine 320 is disordered. Residues alanine 305–lysine 314 show a composition bias toward basic and acidic residues.

Homodimer. In terms of tissue distribution, expressed constitutively in roots, leaves, stems, and flowers.

Its subcellular location is the nucleus. In Arabidopsis thaliana (Mouse-ear cress), this protein is Transcription factor bHLH34 (BHLH34).